The sequence spans 106 residues: Thioredoxin-2 (106 aa).

The 106-residue stretch at 1-106 (MVYQVKDKAD…RLEDVIKANI (106 aa)) folds into the Thioredoxin domain. Catalysis depends on nucleophile residues Cys32 and Cys35. Cys32 and Cys35 are joined by a disulfide.

This sequence belongs to the thioredoxin family. In terms of assembly, monomer.

Functionally, participates in various redox reactions through the reversible oxidation of its active center dithiol to a disulfide and catalyzes dithiol-disulfide exchange reactions. As a reducing substrate of peroxiredoxin 1, thioredoxin 2 is preferred over thioredoxin 1. This chain is Thioredoxin-2, found in Drosophila melanogaster (Fruit fly).